Here is a 205-residue protein sequence, read N- to C-terminus: High frequency lysogenization protein HflD homolog (205 aa).

This sequence belongs to the HflD family.

The protein localises to the cytoplasm. Its subcellular location is the cell inner membrane. The polypeptide is High frequency lysogenization protein HflD homolog (Shewanella baltica (strain OS155 / ATCC BAA-1091)).